We begin with the raw amino-acid sequence, 337 residues long: NADH-quinone oxidoreductase subunit H (337 aa).

8 consecutive transmembrane segments (helical) span residues Ile-13–Leu-33, Ala-82–Ile-102, Val-115–Gly-135, Met-154–Ser-174, Gly-187–Ala-207, Ile-248–Ile-268, Ile-274–Val-294, and Val-313–Asp-333.

It belongs to the complex I subunit 1 family. In terms of assembly, NDH-1 is composed of 14 different subunits. Subunits NuoA, H, J, K, L, M, N constitute the membrane sector of the complex.

It is found in the cell inner membrane. It carries out the reaction a quinone + NADH + 5 H(+)(in) = a quinol + NAD(+) + 4 H(+)(out). NDH-1 shuttles electrons from NADH, via FMN and iron-sulfur (Fe-S) centers, to quinones in the respiratory chain. The immediate electron acceptor for the enzyme in this species is believed to be ubiquinone. Couples the redox reaction to proton translocation (for every two electrons transferred, four hydrogen ions are translocated across the cytoplasmic membrane), and thus conserves the redox energy in a proton gradient. This subunit may bind ubiquinone. This chain is NADH-quinone oxidoreductase subunit H, found in Rhodospirillum rubrum (strain ATCC 11170 / ATH 1.1.1 / DSM 467 / LMG 4362 / NCIMB 8255 / S1).